The chain runs to 200 residues: Superoxide dismutase [Fe] (200 aa).

His28, His80, Asp162, and His166 together coordinate Fe cation.

This sequence belongs to the iron/manganese superoxide dismutase family. Homodimer. Fe cation serves as cofactor.

It catalyses the reaction 2 superoxide + 2 H(+) = H2O2 + O2. In terms of biological role, destroys superoxide anion radicals which are normally produced within the cells and which are toxic to biological systems. The polypeptide is Superoxide dismutase [Fe] (sodB) (Nostoc sp. (strain PCC 7120 / SAG 25.82 / UTEX 2576)).